Reading from the N-terminus, the 233-residue chain is MAKLTKRMRNIREKVEVTKQYEIAEAVALLKELATAKFVESVDVAVNLGIDARKSDQNVRGATVLPHGTGRSVRVAVFAQGANAEAAKEAGAELVGMDDLAAKVKAGEMDFDVVIASPDAMRVVGQLGQILGPRGLMPNPKVGTVTPNVAEAVKNAKAGQVRYRNDKNGIIHTTIGKVVSTKHKLKENLEALLVALKKAKPSAAKGVYIKKVSLSTTMGAGVAIDQASLSATV.

It belongs to the universal ribosomal protein uL1 family. As to quaternary structure, part of the 50S ribosomal subunit.

Its function is as follows. Binds directly to 23S rRNA. The L1 stalk is quite mobile in the ribosome, and is involved in E site tRNA release. In terms of biological role, protein L1 is also a translational repressor protein, it controls the translation of the L11 operon by binding to its mRNA. The protein is Large ribosomal subunit protein uL1 of Proteus vulgaris.